A 421-amino-acid chain; its full sequence is Flap endonuclease 1 (421 aa).

The N-domain stretch occupies residues 1–109; it reads MGIKGLAKLL…HELIKRREKR (109 aa). Residue Asp-34 participates in Mg(2+) binding. 2 residues coordinate DNA: Arg-47 and Arg-75. Residues Asp-91, Glu-163, Glu-165, Asp-184, and Asp-186 each contribute to the Mg(2+) site. Residues 127-258 form an I-domain region; sequence EQDKQSKRLV…KTALKLIREH (132 aa). Glu-163 lines the DNA pocket. The DNA site is built by Gly-236 and Asp-238. Asp-238 is a Mg(2+) binding site. The segment at 284-307 is disordered; that stretch reads KKLDAQSDDDDEEGVESPSKEENN. Residues 289–298 are compositionally biased toward acidic residues; the sequence is QSDDDDEEGV. Positions 379–387 are interaction with PCNA; that stretch reads PQTRMDSFF. Positions 398-421 are disordered; that stretch reads SAAKRKADAAKAKAAVSKKKTKKH.

The protein belongs to the XPG/RAD2 endonuclease family. FEN1 subfamily. As to quaternary structure, interacts with PCNA. Three molecules of FEN1 bind to one PCNA trimer with each molecule binding to one PCNA monomer. PCNA stimulates the nuclease activity without altering cleavage specificity. Requires Mg(2+) as cofactor. In terms of processing, phosphorylated. Phosphorylation upon DNA damage induces relocalization to the nuclear plasma.

The protein localises to the nucleus. It is found in the nucleolus. It localises to the nucleoplasm. The protein resides in the mitochondrion. Its function is as follows. Structure-specific nuclease with 5'-flap endonuclease and 5'-3' exonuclease activities involved in DNA replication and repair. During DNA replication, cleaves the 5'-overhanging flap structure that is generated by displacement synthesis when DNA polymerase encounters the 5'-end of a downstream Okazaki fragment. It enters the flap from the 5'-end and then tracks to cleave the flap base, leaving a nick for ligation. Also involved in the long patch base excision repair (LP-BER) pathway, by cleaving within the apurinic/apyrimidinic (AP) site-terminated flap. Acts as a genome stabilization factor that prevents flaps from equilibrating into structures that lead to duplications and deletions. Also possesses 5'-3' exonuclease activity on nicked or gapped double-stranded DNA, and exhibits RNase H activity. Also involved in replication and repair of rDNA and in repairing mitochondrial DNA. This chain is Flap endonuclease 1, found in Phaeodactylum tricornutum (strain CCAP 1055/1).